Consider the following 532-residue polypeptide: MTKYIFVTGGVVSSIGKGITAASLGRLLKNRGLSVTIQKFDPYINVDPGTMSPYQHGEVYVTDDGAETDLDLGHYERFIDINLNKYSNVTTGKVYSEVIKKERRGDYLGGTVQVIPHITNELKDRVFRAARMTNSDIIITEIGGTVGDIESLPFLEAIRQIKSDVGAENVLYIHTTLIPYIKAAGEMKTKPTQHSVKELRSLGIQPNIIVVRTEQPVSQEMKDKIALFCDIKASEVIESRDEETLYNVPLSLQKQKMDDIVLEHLQLEAPQAEMTDWKNLVHRVKNLSKKVRIGLVGKYVSLQDAYLSVAEALRHAGYDHDAEIEIDWIDSEKVTKENVAEIMKDVDGILVPGGFGDRAIEGKIAAIEYARVNKVPYFGICLGMQLATVEFARNVLGLEGAHSAEIEPETKHNIIDLLPEQKNIENMGGTLRLGLYPARIKQGTKAEAAYGTTLVEERHRHRYEFNNEYREQMEEAGMIVSATSPDGRLVEVVELADHPWFVACQYHPEFISRPNRPQSLFKDFVGAALNNK.

The segment at 1–267 is amidoligase domain; it reads MTKYIFVTGG…DDIVLEHLQL (267 aa). Ser-13 is a CTP binding site. Residue Ser-13 participates in UTP binding. Residue 14 to 19 coordinates ATP; it reads SIGKGI. Tyr-54 lines the L-glutamine pocket. Residue Asp-71 coordinates ATP. Mg(2+) contacts are provided by Asp-71 and Glu-141. Residues 148–150, 188–193, and Lys-224 each bind CTP; these read DIE and KTKPTQ. UTP contacts are provided by residues 188–193 and Lys-224; that span reads KTKPTQ. The Glutamine amidotransferase type-1 domain maps to 292–532; the sequence is RIGLVGKYVS…DFVGAALNNK (241 aa). Residue Gly-354 participates in L-glutamine binding. The Nucleophile; for glutamine hydrolysis role is filled by Cys-381. Residues 382-385, Glu-405, and Arg-462 contribute to the L-glutamine site; that span reads LGMQ. Catalysis depends on residues His-507 and Glu-509.

Belongs to the CTP synthase family. As to quaternary structure, homotetramer.

The catalysed reaction is UTP + L-glutamine + ATP + H2O = CTP + L-glutamate + ADP + phosphate + 2 H(+). The enzyme catalyses L-glutamine + H2O = L-glutamate + NH4(+). It catalyses the reaction UTP + NH4(+) + ATP = CTP + ADP + phosphate + 2 H(+). The protein operates within pyrimidine metabolism; CTP biosynthesis via de novo pathway; CTP from UDP: step 2/2. Its activity is regulated as follows. Allosterically activated by GTP, when glutamine is the substrate; GTP has no effect on the reaction when ammonia is the substrate. The allosteric effector GTP functions by stabilizing the protein conformation that binds the tetrahedral intermediate(s) formed during glutamine hydrolysis. Inhibited by the product CTP, via allosteric rather than competitive inhibition. Its function is as follows. Catalyzes the ATP-dependent amination of UTP to CTP with either L-glutamine or ammonia as the source of nitrogen. Regulates intracellular CTP levels through interactions with the four ribonucleotide triphosphates. The protein is CTP synthase of Listeria monocytogenes serotype 4b (strain F2365).